The chain runs to 147 residues: Large ribosomal subunit protein bL9 (147 aa).

Residues 44–63 (VKTLDAQKRSEDKRKEQEKL) are disordered. Residues 48–63 (DAQKRSEDKRKEQEKL) are compositionally biased toward basic and acidic residues.

This sequence belongs to the bacterial ribosomal protein bL9 family.

In terms of biological role, binds to the 23S rRNA. The sequence is that of Large ribosomal subunit protein bL9 from Brevibacillus brevis (strain 47 / JCM 6285 / NBRC 100599).